A 610-amino-acid polypeptide reads, in one-letter code: Elongation factor 4 (610 aa).

One can recognise a tr-type G domain in the interval 11-193 (QRIRNFSIVA…KIVQDIPAPT (183 aa)). GTP-binding positions include 23-28 (DHGKST) and 140-143 (NKVD).

The protein belongs to the TRAFAC class translation factor GTPase superfamily. Classic translation factor GTPase family. LepA subfamily.

The protein localises to the cell membrane. The catalysed reaction is GTP + H2O = GDP + phosphate + H(+). Its function is as follows. Required for accurate and efficient protein synthesis under certain stress conditions. May act as a fidelity factor of the translation reaction, by catalyzing a one-codon backward translocation of tRNAs on improperly translocated ribosomes. Back-translocation proceeds from a post-translocation (POST) complex to a pre-translocation (PRE) complex, thus giving elongation factor G a second chance to translocate the tRNAs correctly. Binds to ribosomes in a GTP-dependent manner. The sequence is that of Elongation factor 4 from Limosilactobacillus fermentum (strain NBRC 3956 / LMG 18251) (Lactobacillus fermentum).